Consider the following 89-residue polypeptide: RNA-binding protein Hfq (89 aa).

One can recognise a Sm domain in the interval 9-68 (DPFLNALRRERVPVSIYLVNGIKLQGQVESFDQFVILLKNTVSQMVYKHAISTVVPARAL).

Belongs to the Hfq family. In terms of assembly, homohexamer.

Its function is as follows. RNA chaperone that binds small regulatory RNA (sRNAs) and mRNAs to facilitate mRNA translational regulation in response to envelope stress, environmental stress and changes in metabolite concentrations. Also binds with high specificity to tRNAs. The sequence is that of RNA-binding protein Hfq from Shewanella denitrificans (strain OS217 / ATCC BAA-1090 / DSM 15013).